A 446-amino-acid polypeptide reads, in one-letter code: Bifunctional protein GlmU (446 aa).

Residues 1-225 are pyrophosphorylase; that stretch reads MEGIILAAGK…ETEVYGVNDR (225 aa). UDP-N-acetyl-alpha-D-glucosamine is bound by residues 6–9, Lys20, Gln70, and 75–76; these read LAAG and GT. Asp98 contacts Mg(2+). UDP-N-acetyl-alpha-D-glucosamine is bound by residues Gly135, Glu150, Asn165, and Asn223. Asn223 contributes to the Mg(2+) binding site. Residues 226–246 form a linker region; it reads VQLARLTKGVYRRKAEALMQE. The segment at 247-446 is N-acetyltransferase; sequence GVTIIDPETV…RQVNKEDYVK (200 aa). UDP-N-acetyl-alpha-D-glucosamine is bound by residues Arg328 and Lys346. His358 acts as the Proton acceptor in catalysis. The UDP-N-acetyl-alpha-D-glucosamine site is built by Tyr361 and Asn372. Residues Ala375, 381-382, Ser400, Ala418, and Arg435 each bind acetyl-CoA; that span reads NY.

The protein in the N-terminal section; belongs to the N-acetylglucosamine-1-phosphate uridyltransferase family. In the C-terminal section; belongs to the transferase hexapeptide repeat family. As to quaternary structure, homotrimer. Mg(2+) is required as a cofactor.

The protein localises to the cytoplasm. The catalysed reaction is alpha-D-glucosamine 1-phosphate + acetyl-CoA = N-acetyl-alpha-D-glucosamine 1-phosphate + CoA + H(+). It carries out the reaction N-acetyl-alpha-D-glucosamine 1-phosphate + UTP + H(+) = UDP-N-acetyl-alpha-D-glucosamine + diphosphate. Its pathway is nucleotide-sugar biosynthesis; UDP-N-acetyl-alpha-D-glucosamine biosynthesis; N-acetyl-alpha-D-glucosamine 1-phosphate from alpha-D-glucosamine 6-phosphate (route II): step 2/2. It participates in nucleotide-sugar biosynthesis; UDP-N-acetyl-alpha-D-glucosamine biosynthesis; UDP-N-acetyl-alpha-D-glucosamine from N-acetyl-alpha-D-glucosamine 1-phosphate: step 1/1. The protein operates within bacterial outer membrane biogenesis; LPS lipid A biosynthesis. Functionally, catalyzes the last two sequential reactions in the de novo biosynthetic pathway for UDP-N-acetylglucosamine (UDP-GlcNAc). The C-terminal domain catalyzes the transfer of acetyl group from acetyl coenzyme A to glucosamine-1-phosphate (GlcN-1-P) to produce N-acetylglucosamine-1-phosphate (GlcNAc-1-P), which is converted into UDP-GlcNAc by the transfer of uridine 5-monophosphate (from uridine 5-triphosphate), a reaction catalyzed by the N-terminal domain. This Carboxydothermus hydrogenoformans (strain ATCC BAA-161 / DSM 6008 / Z-2901) protein is Bifunctional protein GlmU.